Reading from the N-terminus, the 112-residue chain is Urease subunit gamma (112 aa).

The protein belongs to the urease gamma subunit family. Heterotrimer of UreA (gamma), UreB (beta) and UreC (alpha) subunits. Three heterotrimers associate to form the active enzyme.

The protein resides in the cytoplasm. The catalysed reaction is urea + 2 H2O + H(+) = hydrogencarbonate + 2 NH4(+). The protein operates within nitrogen metabolism; urea degradation; CO(2) and NH(3) from urea (urease route): step 1/1. The polypeptide is Urease subunit gamma (Gloeothece citriformis (strain PCC 7424) (Cyanothece sp. (strain PCC 7424))).